We begin with the raw amino-acid sequence, 325 residues long: Tetraacyldisaccharide 4'-kinase (325 aa).

Threonine 55 to threonine 62 contributes to the ATP binding site.

The protein belongs to the LpxK family.

The enzyme catalyses a lipid A disaccharide + ATP = a lipid IVA + ADP + H(+). Its pathway is glycolipid biosynthesis; lipid IV(A) biosynthesis; lipid IV(A) from (3R)-3-hydroxytetradecanoyl-[acyl-carrier-protein] and UDP-N-acetyl-alpha-D-glucosamine: step 6/6. Transfers the gamma-phosphate of ATP to the 4'-position of a tetraacyldisaccharide 1-phosphate intermediate (termed DS-1-P) to form tetraacyldisaccharide 1,4'-bis-phosphate (lipid IVA). This Citrobacter koseri (strain ATCC BAA-895 / CDC 4225-83 / SGSC4696) protein is Tetraacyldisaccharide 4'-kinase.